Consider the following 370-residue polypeptide: Erythronate-4-phosphate dehydrogenase (370 aa).

The substrate site is built by Ser45 and Thr66. Residues Asp142 and Thr169 each contribute to the NAD(+) site. Arg202 is an active-site residue. Asp228 lines the NAD(+) pocket. Glu233 is an active-site residue. Catalysis depends on His250, which acts as the Proton donor. Gly253 lines the NAD(+) pocket. Position 254 (Tyr254) interacts with substrate.

This sequence belongs to the D-isomer specific 2-hydroxyacid dehydrogenase family. PdxB subfamily. Homodimer.

Its subcellular location is the cytoplasm. It catalyses the reaction 4-phospho-D-erythronate + NAD(+) = (R)-3-hydroxy-2-oxo-4-phosphooxybutanoate + NADH + H(+). The protein operates within cofactor biosynthesis; pyridoxine 5'-phosphate biosynthesis; pyridoxine 5'-phosphate from D-erythrose 4-phosphate: step 2/5. Catalyzes the oxidation of erythronate-4-phosphate to 3-hydroxy-2-oxo-4-phosphonooxybutanoate. The sequence is that of Erythronate-4-phosphate dehydrogenase from Teredinibacter turnerae (strain ATCC 39867 / T7901).